The primary structure comprises 247 residues: Probable transcriptional regulatory protein GTNG_2524 (247 aa).

The segment covering 1-14 has biased composition (basic residues); the sequence is MAGHSKWKNIQRRK. The tract at residues 1–21 is disordered; the sequence is MAGHSKWKNIQRRKNAQDAKR.

This sequence belongs to the TACO1 family.

It localises to the cytoplasm. In Geobacillus thermodenitrificans (strain NG80-2), this protein is Probable transcriptional regulatory protein GTNG_2524.